A 297-amino-acid chain; its full sequence is MNLGSLVSESRNPQTMDLDALSTFDLVTRFNQQDTLVALAVKETLPEVAKAVDAATDALKSGGRIIYMGAGTSGRLGVLDASECPPTFGVPHGLVLGLIAGGPGALLKAVEGAEDNQQLGADDLIAIHLTANDLVVGLAASGRTPYVIGGLEYAKQLGCTTVAISCNPVSPIAQVAAIAISPVVGPEALTGSTRLKSGTAQKLVLNMISTGAMVKFGKVYQNLMVDMQATNIKLVDRACRMVVQATGASREEAEAALKQTDHDVKPAILMILSGLDAAAARAKLDAHQGFLRAALEN.

The 164-residue stretch at 55–218 (ATDALKSGGR…STGAMVKFGK (164 aa)) folds into the SIS domain. Catalysis depends on Glu-83, which acts as the Proton donor. Glu-114 is an active-site residue.

This sequence belongs to the GCKR-like family. MurNAc-6-P etherase subfamily. In terms of assembly, homodimer.

The catalysed reaction is N-acetyl-D-muramate 6-phosphate + H2O = N-acetyl-D-glucosamine 6-phosphate + (R)-lactate. The protein operates within amino-sugar metabolism; 1,6-anhydro-N-acetylmuramate degradation. It participates in amino-sugar metabolism; N-acetylmuramate degradation. It functions in the pathway cell wall biogenesis; peptidoglycan recycling. Specifically catalyzes the cleavage of the D-lactyl ether substituent of MurNAc 6-phosphate, producing GlcNAc 6-phosphate and D-lactate. Together with AnmK, is also required for the utilization of anhydro-N-acetylmuramic acid (anhMurNAc) either imported from the medium or derived from its own cell wall murein, and thus plays a role in cell wall recycling. The polypeptide is N-acetylmuramic acid 6-phosphate etherase (Enterobacter sp. (strain 638)).